Reading from the N-terminus, the 201-residue chain is Transcriptional regulator GfcR (201 aa).

Belongs to the purine/pyrimidine phosphoribosyltransferase family. GfcR subfamily.

The chain is Transcriptional regulator GfcR from Methanobrevibacter smithii (strain ATCC 35061 / DSM 861 / OCM 144 / PS).